Consider the following 394-residue polypeptide: Elongation factor Tu (394 aa).

The region spanning 10-205 (KPHMNVGTIG…TMDNYFDLPE (196 aa)) is the tr-type G domain. The interval 19-26 (GHVDHGKT) is G1. Residue 19-26 (GHVDHGKT) coordinates GTP. Mg(2+) is bound at residue threonine 26. The tract at residues 61 to 65 (GITIN) is G2. Positions 82 to 85 (DCPG) are G3. Residues 82-86 (DCPGH) and 137-140 (NKLD) each bind GTP. Positions 137 to 140 (NKLD) are G4. A G5 region spans residues 173–175 (SAF).

It belongs to the TRAFAC class translation factor GTPase superfamily. Classic translation factor GTPase family. EF-Tu/EF-1A subfamily. As to quaternary structure, monomer.

Its subcellular location is the cytoplasm. The catalysed reaction is GTP + H2O = GDP + phosphate + H(+). Its function is as follows. GTP hydrolase that promotes the GTP-dependent binding of aminoacyl-tRNA to the A-site of ribosomes during protein biosynthesis. This chain is Elongation factor Tu, found in Borrelia duttonii (strain Ly).